A 443-amino-acid polypeptide reads, in one-letter code: Crh-like protein 2 (443 aa).

The N-terminal stretch at 1–20 (MVRIGSSLLLATLAATTVSA) is a signal peptide. In terms of domain architecture, GH16 spans 21–306 (ASDPPKCSQD…TVECYDPPSG (286 aa)). Cysteine 56 and cysteine 67 are oxidised to a cystine. Glutamate 164 functions as the Nucleophile in the catalytic mechanism. Glutamate 168 acts as the Proton donor in catalysis. Glutamate 168 contacts chitin. Residues asparagine 194 and asparagine 237 are each glycosylated (N-linked (GlcNAc...) asparagine). 2 residues coordinate chitin: tryptophan 257 and threonine 268. N-linked (GlcNAc...) asparagine glycans are attached at residues asparagine 332 and asparagine 359. Composition is skewed to low complexity over residues 350-367 (ASSSASGSANKTSSSANT) and 378-410 (EPGNSHSGSSGSGTSTSDGSGSSTGFSQGSETS). Residues 350–420 (ASSSASGSAN…ASSNKNAAPS (71 aa)) are disordered. Residues 411 to 420 (ASSNKNAAPS) are compositionally biased toward polar residues. Residue asparagine 416 is the site of GPI-like-anchor amidated asparagine attachment. The propeptide at 417-443 (AAPSQNERVLNGSFFAVLVAVVALVTL) is removed in mature form. A glycan (N-linked (GlcNAc...) asparagine) is linked at asparagine 427.

The protein belongs to the glycosyl hydrolase 16 family. CRH1 subfamily. In terms of processing, the GPI-like anchor contains a phosphoceramide lipid group. The anchor position has not been determined.

The protein resides in the cell membrane. It is found in the secreted. It localises to the cell wall. It carries out the reaction Random endo-hydrolysis of N-acetyl-beta-D-glucosaminide (1-&gt;4)-beta-linkages in chitin and chitodextrins.. In terms of biological role, dual chitinase/transglycosylase that plays a role in cell wall architecture. Chitinase and transglycosylase activities are coupled. Required for the polysaccharide cross-linking at the septa and the cell wall. More specifically, transfers chitin to 1,6-beta-glucan in the cell wall. This is Crh-like protein 2 from Aspergillus fumigatus (strain ATCC MYA-4609 / CBS 101355 / FGSC A1100 / Af293) (Neosartorya fumigata).